We begin with the raw amino-acid sequence, 301 residues long: Olfactory receptor 10AG1 (301 aa).

Residues 1-16 are Extracellular-facing; the sequence is MEFVLLGFSDIPNLHW. Residues 17-37 traverse the membrane as a helical segment; it reads MLFSIFLLMYLMILMCNGIII. At 38–45 the chain is on the cytoplasmic side; it reads LLIKIHPA. The chain crosses the membrane as a helical span at residues 46–66; it reads LQTPMYFFLSNFSLLEICYVT. The Extracellular portion of the chain corresponds to 67-90; that stretch reads IIIPRMLMDIWTQKGNISLFACAT. N-linked (GlcNAc...) asparagine glycosylation is present at N82. A disulfide bridge links C88 with C180. The helical transmembrane segment at 91–111 threads the bilayer; sequence QMCFFLMLGGTECLLLTVMAY. Topologically, residues 112–130 are cytoplasmic; sequence DRYVAICKPLQYPLVMNHK. A helical membrane pass occupies residues 131-151; it reads VCIQLIIASWTITIPVVIGET. The Extracellular segment spans residues 152–188; that stretch reads CQIFLLPFCGTNTINHFFCDIPPILKLACGNIFVNEI. A helical membrane pass occupies residues 189-208; sequence TVHVVAVVFITVPFLLIVVS. The Cytoplasmic segment spans residues 209-228; the sequence is YGKIISNILKLSSARGKAKA. A helical transmembrane segment spans residues 229 to 249; that stretch reads FSTCSSHLIVVILFFGAGTIT. At 250–262 the chain is on the extracellular side; sequence YLQPKPHQFQRMG. Residues 263-283 form a helical membrane-spanning segment; the sequence is KLISLFYTILIPTLNPIIYTL. Over 284-301 the chain is Cytoplasmic; it reads RNKDIMVALRKLLAKLLT.

This sequence belongs to the G-protein coupled receptor 1 family.

Its subcellular location is the cell membrane. Its function is as follows. Odorant receptor. The polypeptide is Olfactory receptor 10AG1 (OR10AG1) (Homo sapiens (Human)).